The chain runs to 1305 residues: Contactin-associated protein like 5-3 (1305 aa).

An N-terminal signal peptide occupies residues 1-24; the sequence is MDSVPRLNSVFTLVLSGLWHFGLT. The region spanning 25–174 is the F5/8 type C domain; the sequence is ATNYNCDDPL…IGMRVEVYGC (150 aa). The Extracellular portion of the chain corresponds to 25 to 1235; sequence ATNYNCDDPL…EPLTNAVPSD (1211 aa). 2 consecutive Laminin G-like domains span residues 180–360 and 367–544; these read VADF…TFSC and PITF…IDLC. Asn-282 carries N-linked (GlcNAc...) asparagine glycosylation. A disulfide bridge connects residues Cys-329 and Cys-360. An N-linked (GlcNAc...) asparagine glycan is attached at Asn-496. 3 disulfide bridges follow: Cys-512–Cys-544, Cys-550–Cys-561, and Cys-555–Cys-570. Residues 546–583 enclose the EGF-like 1 domain; it reads IKDRCLPNYCEHGGQCAQTWTNFYCNCSDTGYTGATCH. Residue Asn-571 is glycosylated (N-linked (GlcNAc...) asparagine). Cys-572 and Cys-582 are oxidised to a cystine. Positions 584–790 constitute a Fibrinogen C-terminal domain; sequence DSIYEQSCEV…LRCYGDRHFW (207 aa). One can recognise a Laminin G-like 3 domain in the interval 791–956; the sequence is NAVSFSTEAS…KVTSGVRPGC (166 aa). 4 cysteine pairs are disulfide-bonded: Cys-929/Cys-956, Cys-960/Cys-973, Cys-967/Cys-982, and Cys-984/Cys-994. The EGF-like 2 domain maps to 957–995; the sequence is PGHCSSYGRNCQNGGKCVEKHIGYSCDCTNSPYEGPFCQ. One can recognise a Laminin G-like 4 domain in the interval 1013 to 1198; that stretch reads QEPYSVTKNT…VQRTLTESSC (186 aa). N-linked (GlcNAc...) asparagine glycosylation is found at Asn-1023 and Asn-1057. The cysteines at positions 1163 and 1198 are disulfide-linked. Residues 1236 to 1256 form a helical membrane-spanning segment; the sequence is LAVIGGIIAVVTFISFSVIGI. At 1257-1305 the chain is on the cytoplasmic side; it reads MTHFFYQHKRSHYASQMKEKEYPENVDSSSRNDIDLQNTTRECKQEDFI.

The protein belongs to the neurexin family. In terms of tissue distribution, expressed in brain.

The protein resides in the membrane. In terms of biological role, may play a role in the correct development and proper functioning of the peripheral and central nervous system and be involved in cell adhesion and intercellular communication. The chain is Contactin-associated protein like 5-3 (Cntnap5c) from Mus musculus (Mouse).